The primary structure comprises 497 residues: uncharacterized protein (497 aa).

Ca(2+)-binding residues include aspartate 12, threonine 13, and cysteine 52. Catalysis depends on cysteine 52, which acts as the Nucleophile. Residue cysteine 52 is modified to 3-oxoalanine (Cys). The active site involves histidine 102. Positions 284 and 285 each coordinate Ca(2+).

Belongs to the sulfatase family. The cofactor is Ca(2+). The conversion to 3-oxoalanine (also known as C-formylglycine, FGly), of a serine or cysteine residue in prokaryotes and of a cysteine residue in eukaryotes, is critical for catalytic activity.

This is an uncharacterized protein from Escherichia coli (strain K12).